Reading from the N-terminus, the 189-residue chain is ECF RNA polymerase sigma-E factor (189 aa).

Positions 1–153 (MAEQLTDQAL…TAITLRELEG (153 aa)) are binds RNAP core. The sigma-70 factor domain-2 stretch occupies residues 25 to 92 (LVSRYQNKVA…KNYLTAQGRR (68 aa)). The Polymerase core binding motif lies at 48 to 61 (DVVQESFIKAYRSI). The tract at residues 129 to 180 (RIVFDTIHNLPEDLKTAITLRELEGLSYEDIAEIMDCPVGTVRSRIFRAREM) is sigma-70 factor domain-4. A DNA-binding region (H-T-H motif) is located at residues 156 to 175 (YEDIAEIMDCPVGTVRSRIF).

The protein belongs to the sigma-70 factor family. ECF subfamily. Interacts transiently with the RNAP catalytic core formed by RpoA, RpoB, RpoC and RpoZ (2 alpha, 1 beta, 1 beta' and 1 omega subunit) to form the RNAP holoenzyme that can initiate transcription. Interacts 1:1 with anti-sigma-E factor RseA which prevents binding to RNAP catalytic core.

It is found in the cytoplasm. ECF sigma-E is held in an inactive form by its cognate anti-sigma factor (RseA) until released by regulated intramembrane proteolysis (RIP). RIP occurs when an extracytoplasmic signal (periplasmic stress and excess LPS) triggers a concerted proteolytic cascade to transmit information and elicit cellular responses. The anti-sigma factor RseA is an inner membrane protein, binding sigma-E in the cytoplasm and RseB in the periplasm. RseA is first cut extracytoplasmically (site-1 protease, S1P, by DegS), then within the membrane itself (site-2 protease, S2P, by RseP), while cytoplasmic proteases (predominantly ClpX-ClpP) finish degrading the regulatory protein, liberating sigma-E. Degradation of RseA requires 2 signals to activate DegS; an outer membrane protein (OMP) signal activates DegS, while an LPS signal causes release of RseB from RseA, freeing RseA to be cleaved. In terms of biological role, sigma factors are initiation factors that promote the attachment of RNA polymerase (RNAP) to specific initiation sites and are then released. Extracytoplasmic function (ECF) sigma-E controls the envelope stress response, responding to periplasmic protein stress, increased levels of periplasmic lipopolysaccharide (LPS) as well as heat shock and oxidative stress; it controls protein processing in the extracytoplasmic compartment. This Haemophilus influenzae (strain ATCC 51907 / DSM 11121 / KW20 / Rd) protein is ECF RNA polymerase sigma-E factor (rpoE).